The sequence spans 405 residues: MRIIKPFAILTPQTIIQDKAVAFDKKIEAIDTVENLIKKYPNAAVEHDENSLLLPGFANPHLHLEFSANKATLQYGDFIPWLYSVIRHREDLLPLCDGACLEQTLSSIIQTGTTAIGAISSYGEDLQACIDSALKVVYFNEVIGSNAATADVMYASFLERFHQSKKHENERFKAAVAIHSPYSVHYILAKRALDIAKKYGSLVSVHFMESRAEREWLDKGSGEFAKFFKEFLNQTRPVNDTKSFLELFKELHTLFVHMVWANEEEIQTIASYNAHIIHCPISNRLLGNGVLDLEKIKSIPYAIATDGLSSNYSLNMYEELKAALFVHPNKEATTFAKELIIRATKAGYDALGFEGGEIAVGKDADMQLIDLPEGLTNVEDLYLHVILHTTKPKKVYIQGEEHVRE.

Positions 61 and 63 each coordinate a divalent metal cation. Residues glutamate 141, serine 145, and histidine 179 each contribute to the substrate site. Residue histidine 206 participates in a divalent metal cation binding. Glutamate 209 (proton donor) is an active-site residue. Residue aspartate 306 coordinates a divalent metal cation.

The protein belongs to the metallo-dependent hydrolases superfamily. A divalent metal cation is required as a cofactor.

The enzyme catalyses 6-amino-6-deoxyfutalosine + H2O + H(+) = futalosine + NH4(+). The protein operates within quinol/quinone metabolism; menaquinone biosynthesis. Catalyzes the deamination of aminodeoxyfutalosine (AFL) into futalosine (FL), a step in the biosynthesis of menaquinone (MK, vitamin K2). To a lesser extent, can also deaminate 5'-methylthioadenosine. The polypeptide is Aminodeoxyfutalosine deaminase (Nitratiruptor sp. (strain SB155-2)).